Consider the following 412-residue polypeptide: Lysosomal phospholipase A and acyltransferase (412 aa).

Positions 1-33 are cleaved as a signal peptide; sequence MGLHLRPYRVGLLPDGLLFLLLLLMLLADPALP. A substrate-binding site is contributed by Asp-46. A disulfide bridge links Cys-65 with Cys-89. An N-linked (GlcNAc...) asparagine glycan is attached at Asn-99. The Acyl-ester intermediate role is filled by Ser-198. Ser-198 serves as a coordination point for Zn(2+). Residue Met-199 participates in substrate binding. Asn-273 and Asn-289 each carry an N-linked (GlcNAc...) asparagine glycan. Zn(2+) is bound by residues Asp-340 and Cys-355. Active-site charge relay system residues include Asp-360 and His-392. His-392 is a binding site for Zn(2+). N-linked (GlcNAc...) asparagine glycosylation is present at Asn-398.

This sequence belongs to the AB hydrolase superfamily. Lipase family. In terms of processing, N-glycosylated. N-glycosylation is important for maturation of the enzyme and normal subcellular location. As to expression, detected in blood plasma (at protein level). Ubiquitous. Highly expressed in heart, placenta, skeletal muscle, kidney and pancreas. Detected at lower levels in spleen, thymus, prostate, testis, ovary, small intestine, colon and peripheral blood leukocytes.

The protein resides in the lysosome. Its subcellular location is the secreted. It is found in the membrane. The catalysed reaction is a 1,2-diacyl-sn-glycero-3-phosphocholine + H2O = a 2-acyl-sn-glycero-3-phosphocholine + a fatty acid + H(+). The enzyme catalyses 1-hexadecanoyl-2-(9Z-octadecenoyl)-sn-glycero-3-phosphocholine + H2O = 2-(9Z-octadecenoyl)-sn-glycero-3-phosphocholine + hexadecanoate + H(+). It carries out the reaction 1-hexadecanoyl-2-glutaroyl-sn-glycero-3-phosphocholine + H2O = 2-glutaroyl-sn-glycero-3-phosphocholine + hexadecanoate + H(+). It catalyses the reaction 1-hexadecanoyl-2-nonadioyl-sn-glycero-3-phosphocholine + H2O = 2-nonadioyl-sn-glycero-3-phosphocholine + hexadecanoate + H(+). The catalysed reaction is 1-hexadecanoyl-2-(5-oxopentanoyl)-sn-glycero-3-phosphocholine + H2O = 2-(5-oxopentanoyl)-sn-glycero-3-phosphocholine + hexadecanoate + H(+). The enzyme catalyses 1-hexadecanoyl-2-(9-oxononanoyl)-sn-glycero-3-phosphocholine + H2O = 2-(9-oxononanoyl)-sn-glycero-3-phosphocholine + hexadecanoate + H(+). It carries out the reaction 1,2-dihexadecanoyl-sn-glycero-3-phosphocholine + H2O = 2-hexadecanoyl-sn-glycero-3-phosphocholine + hexadecanoate + H(+). It catalyses the reaction a 1,2-diacyl-sn-glycero-3-phosphocholine + H2O = a 1-acyl-sn-glycero-3-phosphocholine + a fatty acid + H(+). The catalysed reaction is 1,2-di-(9Z-octadecenoyl)-sn-glycero-3-phosphocholine + H2O = 1-(9Z-octadecenoyl)-sn-glycero-3-phosphocholine + (9Z)-octadecenoate + H(+). The enzyme catalyses 1-hexadecanoyl-2-(9Z-octadecenoyl)-sn-glycero-3-phosphocholine + H2O = 1-hexadecanoyl-sn-glycero-3-phosphocholine + (9Z)-octadecenoate + H(+). It carries out the reaction 1,2-dihexadecanoyl-sn-glycero-3-phosphocholine + H2O = 1-hexadecanoyl-sn-glycero-3-phosphocholine + hexadecanoate + H(+). It catalyses the reaction a 1-acyl-sn-glycero-3-phosphocholine + H2O = sn-glycerol 3-phosphocholine + a fatty acid + H(+). The catalysed reaction is 1-hexadecanoyl-sn-glycero-3-phosphocholine + H2O = sn-glycerol 3-phosphocholine + hexadecanoate + H(+). The enzyme catalyses N-(acetyl)-sphing-4-enine + a 1,2-diacyl-sn-glycero-3-phosphoethanolamine = 1-O-acyl-N-(acetyl)-sphing-4-enine + a 2-acyl-sn-glycero-3-phosphoethanolamine. It carries out the reaction 1-hexadecanoyl-2-(9Z-octadecenoyl)-sn-glycero-3-phosphoethanolamine + N-(acetyl)-sphing-4-enine = 2-(9Z-octadecenoyl)-sn-glycero-3-phosphoethanolamine + 1-hexadecanoyl-N-(acetyl)-sphing-4-enine. It catalyses the reaction 1-hexadecanoyl-2-(9Z,12Z-octadecadienoyl)-sn-glycero-3-phosphoethanolamine + N-(acetyl)-sphing-4-enine = 2-(9Z,12Z)-octadecadienoyl-sn-glycero-3-phosphoethanolamine + 1-hexadecanoyl-N-(acetyl)-sphing-4-enine. The catalysed reaction is 1-hexadecanoyl-2-(5Z,8Z,11Z,14Z-eicosatetraenoyl)-sn-glycero-3-phosphoethanolamine + N-(acetyl)-sphing-4-enine = 2-(5Z,8Z,11Z,14Z)-eicosatetraenoyl-sn-glycero-3-phosphoethanolamine + 1-hexadecanoyl-N-(acetyl)-sphing-4-enine. The enzyme catalyses N-(acetyl)-sphing-4-enine + a 1,2-diacyl-sn-glycero-3-phosphoethanolamine = 1-O-acyl-N-(acetyl)-sphing-4-enine + a 1-acyl-sn-glycero-3-phosphoethanolamine. It carries out the reaction 1-hexadecanoyl-2-(9Z-octadecenoyl)-sn-glycero-3-phosphoethanolamine + N-(acetyl)-sphing-4-enine = 1-(9Z-octadecenoyl)-N-(acetyl)-sphing-4-enine + 1-hexadecanoyl-sn-glycero-3-phosphoethanolamine. It catalyses the reaction 1-hexadecanoyl-2-(9Z,12Z-octadecadienoyl)-sn-glycero-3-phosphoethanolamine + N-(acetyl)-sphing-4-enine = 1-(9Z,12Z-octadecadienoyl)-N-acetylsphing-4-enine + 1-hexadecanoyl-sn-glycero-3-phosphoethanolamine. The catalysed reaction is 1-hexadecanoyl-2-(5Z,8Z,11Z,14Z-eicosatetraenoyl)-sn-glycero-3-phosphoethanolamine + N-(acetyl)-sphing-4-enine = 1-(5Z,8Z,11Z,14Z)-eicosatetraenoyl-N-(acetyl)-sphing-4-enine + 1-hexadecanoyl-sn-glycero-3-phosphoethanolamine. The enzyme catalyses N-(acetyl)-sphing-4-enine + a 1,2-diacyl-sn-glycero-3-phosphocholine = 1-O-acyl-N-(acetyl)-sphing-4-enine + a 1-acyl-sn-glycero-3-phosphocholine. It carries out the reaction 1-hexadecanoyl-2-(9Z-octadecenoyl)-sn-glycero-3-phosphocholine + N-(acetyl)-sphing-4-enine = 1-(9Z-octadecenoyl)-N-(acetyl)-sphing-4-enine + 1-hexadecanoyl-sn-glycero-3-phosphocholine. It catalyses the reaction 1-hexadecanoyl-2-(9Z,12Z-octadecadienoyl)-sn-glycero-3-phosphocholine + N-(acetyl)-sphing-4-enine = 1-(9Z,12Z-octadecadienoyl)-N-acetylsphing-4-enine + 1-hexadecanoyl-sn-glycero-3-phosphocholine. The catalysed reaction is 1-hexadecanoyl-2-(5Z,8Z,11Z,14Z-eicosatetraenoyl)-sn-glycero-3-phosphocholine + N-(acetyl)-sphing-4-enine = 1-(5Z,8Z,11Z,14Z)-eicosatetraenoyl-N-(acetyl)-sphing-4-enine + 1-hexadecanoyl-sn-glycero-3-phosphocholine. The enzyme catalyses 1-hexadecanoyl-2-(4Z,7Z,10Z,13Z,16Z,19Z-docosahexaenoyl)-sn-glycero-3-phosphocholine + N-(acetyl)-sphing-4-enine = 1-(4Z,7Z,10Z,13Z,16Z,19Z-docosahexaenoyl)-N-(acetyl)-sphing-4-enine + 1-hexadecanoyl-sn-glycero-3-phosphocholine. It carries out the reaction 1-octadecanoyl-2-(9Z-octadecenoyl)-sn-glycero-3-phosphocholine + N-(acetyl)-sphing-4-enine = 1-(9Z-octadecenoyl)-N-(acetyl)-sphing-4-enine + 1-octadecanoyl-sn-glycero-3-phosphocholine. It catalyses the reaction 1-octadecanoyl-2-(9Z,12Z)-octadecadienoyl-sn-glycero-3-phosphocholine + N-(acetyl)-sphing-4-enine = 1-(9Z,12Z-octadecadienoyl)-N-acetylsphing-4-enine + 1-octadecanoyl-sn-glycero-3-phosphocholine. The catalysed reaction is 1-octadecanoyl-2-(5Z,8Z,11Z,14Z-eicosatetraenoyl)-sn-glycero-3-phosphocholine + N-(acetyl)-sphing-4-enine = 1-(5Z,8Z,11Z,14Z)-eicosatetraenoyl-N-(acetyl)-sphing-4-enine + 1-octadecanoyl-sn-glycero-3-phosphocholine. The enzyme catalyses 1-(9Z-octadecenoyl)-2-hexadecanoyl-sn-glycero-3-phosphocholine + N-(acetyl)-sphing-4-enine = 1-hexadecanoyl-N-(acetyl)-sphing-4-enine + 1-(9Z-octadecenoyl)-sn-glycero-3-phosphocholine. It carries out the reaction 1-(9Z)-octadecenoyl-2-octadecanoyl-sn-glycero-3-phosphocholine + N-(acetyl)-sphing-4-enine = 1-octadecanoyl-N-(acetyl)-sphing-4-enine + 1-(9Z-octadecenoyl)-sn-glycero-3-phosphocholine. It catalyses the reaction 1,2-di-(9Z-octadecenoyl)-sn-glycero-3-phosphocholine + N-(acetyl)-sphing-4-enine = 1-(9Z-octadecenoyl)-N-(acetyl)-sphing-4-enine + 1-(9Z-octadecenoyl)-sn-glycero-3-phosphocholine. The catalysed reaction is N-(acetyl)-sphing-4-enine + a 1,2-diacyl-sn-glycero-3-phosphocholine = 1-O-acyl-N-(acetyl)-sphing-4-enine + a 2-acyl-sn-glycero-3-phosphocholine. The enzyme catalyses 1-hexadecanoyl-2-(9Z-octadecenoyl)-sn-glycero-3-phosphocholine + N-(acetyl)-sphing-4-enine = 1-hexadecanoyl-N-(acetyl)-sphing-4-enine + 2-(9Z-octadecenoyl)-sn-glycero-3-phosphocholine. It carries out the reaction 1-hexadecanoyl-2-(9Z,12Z-octadecadienoyl)-sn-glycero-3-phosphocholine + N-(acetyl)-sphing-4-enine = 2-(9Z,12Z-octadecadienoyl)-sn-glycero-3-phosphocholine + 1-hexadecanoyl-N-(acetyl)-sphing-4-enine. It catalyses the reaction 1-hexadecanoyl-2-(5Z,8Z,11Z,14Z-eicosatetraenoyl)-sn-glycero-3-phosphocholine + N-(acetyl)-sphing-4-enine = 1-hexadecanoyl-N-(acetyl)-sphing-4-enine + 2-(5Z,8Z,11Z,14Z)-eicosatetraenoyl-sn-glycero-3-phosphocholine. The catalysed reaction is 1-hexadecanoyl-2-(4Z,7Z,10Z,13Z,16Z,19Z-docosahexaenoyl)-sn-glycero-3-phosphocholine + N-(acetyl)-sphing-4-enine = 2-(4Z,7Z,10Z,13Z,16Z,19Z-docosahexaenoyl)-sn-glycero-3-phosphocholine + 1-hexadecanoyl-N-(acetyl)-sphing-4-enine. The enzyme catalyses 1-hexadecanoyl-2-nonadioyl-sn-glycero-3-phosphocholine + N-(acetyl)-sphing-4-enine = 2-nonadioyl-sn-glycero-3-phosphocholine + 1-hexadecanoyl-N-(acetyl)-sphing-4-enine. It carries out the reaction 1-octadecanoyl-2-(9Z-octadecenoyl)-sn-glycero-3-phosphocholine + N-(acetyl)-sphing-4-enine = 1-octadecanoyl-N-(acetyl)-sphing-4-enine + 2-(9Z-octadecenoyl)-sn-glycero-3-phosphocholine. It catalyses the reaction 1-octadecanoyl-2-(5Z,8Z,11Z,14Z-eicosatetraenoyl)-sn-glycero-3-phosphocholine + N-(acetyl)-sphing-4-enine = 1-octadecanoyl-N-(acetyl)-sphing-4-enine + 2-(5Z,8Z,11Z,14Z)-eicosatetraenoyl-sn-glycero-3-phosphocholine. The catalysed reaction is 1-(9Z-octadecenoyl)-2-hexadecanoyl-sn-glycero-3-phosphocholine + N-(acetyl)-sphing-4-enine = 1-(9Z-octadecenoyl)-N-(acetyl)-sphing-4-enine + 2-hexadecanoyl-sn-glycero-3-phosphocholine. The enzyme catalyses 1-(9Z)-octadecenoyl-2-octadecanoyl-sn-glycero-3-phosphocholine + N-(acetyl)-sphing-4-enine = 2-octadecanoyl-sn-glycero-3-phosphocholine + 1-(9Z-octadecenoyl)-N-(acetyl)-sphing-4-enine. It carries out the reaction a 1,2-diacyl-sn-glycero-3-phospho-L-serine + N-(acetyl)-sphing-4-enine = a 2-acyl-sn-glycero-3-phospho-L-serine + 1-O-acyl-N-(acetyl)-sphing-4-enine. It catalyses the reaction 1-octadecanoyl-2-(9Z-octadecenoyl)-sn-glycero-3-phospho-L-serine + N-(acetyl)-sphing-4-enine = 2-(9Z-octadecenoyl)-sn-glycero-3-phospho-L-serine + 1-octadecanoyl-N-(acetyl)-sphing-4-enine. The catalysed reaction is a 1,2-diacyl-sn-glycero-3-phospho-L-serine + N-(acetyl)-sphing-4-enine = 1-O-acyl-N-(acetyl)-sphing-4-enine + a 1-acyl-sn-glycero-3-phospho-L-serine. The enzyme catalyses 1-octadecanoyl-2-(9Z-octadecenoyl)-sn-glycero-3-phospho-L-serine + N-(acetyl)-sphing-4-enine = 1-octadecanoyl-sn-glycero-3-phosphoserine + 1-(9Z-octadecenoyl)-N-(acetyl)-sphing-4-enine. It carries out the reaction a 1,2-diacyl-sn-glycero-3-phospho-(1'-sn-glycerol) + N-(acetyl)-sphing-4-enine = 2-acyl-sn-glycero-3-phospho-(1'-sn-glycerol) + 1-O-acyl-N-(acetyl)-sphing-4-enine. It catalyses the reaction 1-octadecanoyl-2-(9Z-octadecenoyl)-sn-glycero-3-phospho-(1'-sn-glycerol) + N-(acetyl)-sphing-4-enine = 2-(9Z-octadecenoyl)-sn-glycero-3-phospho-(1'-sn-glycerol) + 1-octadecanoyl-N-(acetyl)-sphing-4-enine. The catalysed reaction is a 1,2-diacyl-sn-glycero-3-phospho-(1'-sn-glycerol) + N-(acetyl)-sphing-4-enine = 1-O-acyl-N-(acetyl)-sphing-4-enine + 1-acyl-sn-glycero-3-phospho-(1'-sn-glycerol). The enzyme catalyses 1-octadecanoyl-2-(9Z-octadecenoyl)-sn-glycero-3-phospho-(1'-sn-glycerol) + N-(acetyl)-sphing-4-enine = 1-octadecanoyl-sn-glycero-3-phospho-(1'-sn-glycerol) + 1-(9Z-octadecenoyl)-N-(acetyl)-sphing-4-enine. It carries out the reaction an N-acylethanolamine + a 1,2-diacyl-sn-glycero-3-phosphocholine = 2-(acylamino)ethyl fatty acid + a 2-acyl-sn-glycero-3-phosphocholine. It catalyses the reaction an N-acylethanolamine + a 1,2-diacyl-sn-glycero-3-phosphocholine = 2-(acylamino)ethyl fatty acid + a 1-acyl-sn-glycero-3-phosphocholine. The catalysed reaction is N-(5Z,8Z,11Z,14Z-eicosatetraenoyl)-ethanolamine + 1,2-di-(9Z-octadecenoyl)-sn-glycero-3-phosphocholine = 2-[(5Z,8Z,11Z,14Z)-eicosatetraenoylamino]ethyl (9Z)-octadecenoate + (9Z-octadecenoyl)-sn-glycero-3-phosphocholine. The enzyme catalyses N-(9Z-octadecenoyl) ethanolamine + 1,2-di-(9Z-octadecenoyl)-sn-glycero-3-phosphocholine = 2-[(9Z)-octadecenoylamino]ethyl (9Z)-octadecenoate + (9Z-octadecenoyl)-sn-glycero-3-phosphocholine. It carries out the reaction a 3-acyl-sn-glycerol + a 1,2-diacyl-sn-glycero-3-phosphocholine = a 1,3-diacylglycerol + a 1-acyl-sn-glycero-3-phosphocholine. It catalyses the reaction a 3-acyl-sn-glycerol + a 1,2-diacyl-sn-glycero-3-phosphocholine = a 1,3-diacylglycerol + a 2-acyl-sn-glycero-3-phosphocholine. The catalysed reaction is 3-(9Z-octadecenoyl)-sn-glycerol + 1,2-di-(9Z-octadecenoyl)-sn-glycero-3-phosphocholine = 1,3-di-(9Z-octadecenoyl)-glycerol + (9Z-octadecenoyl)-sn-glycero-3-phosphocholine. The enzyme catalyses 3-hexadecanoyl-sn-glycerol + 1,2-di-(9Z-octadecenoyl)-sn-glycero-3-phosphocholine = 1-(9Z)-octadecenoyl-3-hexadecanoyl-sn-glycerol + (9Z-octadecenoyl)-sn-glycero-3-phosphocholine. It carries out the reaction a 1-acyl-sn-glycerol + a 1,2-diacyl-sn-glycero-3-phosphocholine = a 1,3-diacylglycerol + a 2-acyl-sn-glycero-3-phosphocholine. It catalyses the reaction a 1-acyl-sn-glycerol + a 1,2-diacyl-sn-glycero-3-phosphocholine = a 1,3-diacylglycerol + a 1-acyl-sn-glycero-3-phosphocholine. The catalysed reaction is 1-(9Z-octadecenoyl)-sn-glycerol + 1,2-di-(9Z-octadecenoyl)-sn-glycero-3-phosphocholine = 1,3-di-(9Z-octadecenoyl)-glycerol + (9Z-octadecenoyl)-sn-glycero-3-phosphocholine. The enzyme catalyses 1-hexadecanoyl-sn-glycerol + 1,2-di-(9Z-octadecenoyl)-sn-glycero-3-phosphocholine = 1-hexadecanoyl-3-(9Z)-octadecenoyl-sn-glycerol + (9Z-octadecenoyl)-sn-glycero-3-phosphocholine. It carries out the reaction a 2-acylglycerol + a 1,2-diacyl-sn-glycero-3-phosphocholine = a 1,2-diacylglycerol + a 2-acyl-sn-glycero-3-phosphocholine. It catalyses the reaction a 2-acylglycerol + a 1,2-diacyl-sn-glycero-3-phosphocholine = a 1,2-diacylglycerol + a 1-acyl-sn-glycero-3-phosphocholine. The catalysed reaction is 2-hexadecanoylglycerol + 1,2-di-(9Z-octadecenoyl)-sn-glycero-3-phosphocholine = 1-(9Z)-octadecenoyl-2-hexadecanoylglycerol + (9Z-octadecenoyl)-sn-glycero-3-phosphocholine. The enzyme catalyses 1-O-alkylglycerol + a 1,2-diacyl-sn-glycero-3-phosphocholine = 1-O-alkyl-3-acylglycerol + a 1-acyl-sn-glycero-3-phosphocholine. It carries out the reaction 1-O-alkylglycerol + a 1,2-diacyl-sn-glycero-3-phosphocholine = 1-O-alkyl-3-acylglycerol + a 2-acyl-sn-glycero-3-phosphocholine. It catalyses the reaction 1-O-hexadecylglycerol + 1,2-di-(9Z-octadecenoyl)-sn-glycero-3-phosphocholine = 1-O-hexadecyl-3-(9Z)-octadecenoylglycerol + (9Z-octadecenoyl)-sn-glycero-3-phosphocholine. The catalysed reaction is 1-O-alkyl-2-acyl-sn-glycerol + a 1,2-diacyl-sn-glycero-3-phosphocholine = 1-O-alkyl-2,3-diacyl-sn-glycerol + a 2-acyl-sn-glycero-3-phosphocholine. The enzyme catalyses 1-O-alkyl-2-acyl-sn-glycerol + a 1,2-diacyl-sn-glycero-3-phosphocholine = 1-O-alkyl-2,3-diacyl-sn-glycerol + a 1-acyl-sn-glycero-3-phosphocholine. It carries out the reaction 1-O-hexadecyl-2-acetyl-sn-glycerol + 1,2-di-(9Z-octadecenoyl)-sn-glycero-3-phosphocholine = 1-O-hexadecyl-2-acetyl-3-(9Z)-octadecenoyl-sn-glycerol + (9Z-octadecenoyl)-sn-glycero-3-phosphocholine. It catalyses the reaction 1-O-hexadecyl-2-O-methyl-sn-glycerol + 1,2-di-(9Z-octadecenoyl)-sn-glycero-3-phosphocholine = 1-O-hexadecyl-2-O-methyl-3-(9Z)-octadecenoyl-sn-glycerol + (9Z-octadecenoyl)-sn-glycero-3-phosphocholine. The catalysed reaction is a 1,2-diacyl-sn-glycero-3-phosphoethanolamine + H2O = a 1-acyl-sn-glycero-3-phosphoethanolamine + a fatty acid + H(+). The enzyme catalyses 1-acyl-2-(5Z,8Z,11Z,14Z)-eicosatetraenoyl-sn-glycero-3-phosphoethanolamine + H2O = a 1-acyl-sn-glycero-3-phosphoethanolamine + (5Z,8Z,11Z,14Z)-eicosatetraenoate + H(+). It carries out the reaction a 1,2-diacyl-sn-glycero-3-phospho-(1'-sn-glycerol) + H2O = 1-acyl-sn-glycero-3-phospho-(1'-sn-glycerol) + a fatty acid + H(+). It catalyses the reaction 1-hexadecanoyl-2-(9Z-octadecenoyl)-sn-glycero-3-phospho-(1'-sn-glycerol) + H2O = 1-hexadecanoyl-sn-glycero-3-phospho-(1'-sn-glycerol) + (9Z)-octadecenoate + H(+). The catalysed reaction is a 1,2-diacyl-sn-glycero-3-phospho-(1'-sn-glycerol) + H2O = 2-acyl-sn-glycero-3-phospho-(1'-sn-glycerol) + a fatty acid + H(+). The enzyme catalyses 1-hexadecanoyl-2-(9Z-octadecenoyl)-sn-glycero-3-phospho-(1'-sn-glycerol) + H2O = 2-(9Z-octadecenoyl)-sn-glycero-3-phospho-(1'-sn-glycerol) + hexadecanoate + H(+). With respect to regulation, inhibited by zinc ions at neutral pH. Zinc ions in plasma may keep the enzyme from hydrolyzing inappropriate substrates. Has dual calcium-independent phospholipase and O-acyltransferase activities with a potential role in glycerophospholipid homeostasis and remodeling of acyl groups of lipophilic alcohols present in acidic cellular compartments. Catalyzes hydrolysis of the ester bond of the fatty acyl group attached at sn-1 or sn-2 position of phospholipids (phospholipase A1 or A2 activity) and transfer it to the hydroxyl group at the first carbon of lipophilic alcohols (O-acyltransferase activity). Among preferred fatty acyl donors are phosphatidylcholines, phosphatidylethanolamines, phosphatidylglycerols and phosphatidylserines. Favors sn-2 over sn-1 deacylation of unsaturated fatty acyl groups of phosphatidylcholines, phosphatidylethanolamines, and phosphatidylglycerols. Among preferred fatty acyl acceptors are natural lipophilic alcohols including short-chain ceramide N-acetyl-sphingosine (C2 ceramide), alkylacylglycerols, monoacylglycerols, and acylethanolamides such as anandamide and oleoylethanolamide. Selectively hydrolyzes the sn-1 fatty acyl group of truncated oxidized phospholipids and may play a role in detoxification of reactive oxidized phospholipids during oxidative stress. Required for normal phospholipid degradation in alveolar macrophages with potential implications in the clearance of pulmonary surfactant, which is mainly composed of dipalmitoylphosphatidylcholine (1,2-dihexadecanoyl-sn-glycero-3-phosphocholine). Involved in the first step of bis(monoacylglycero)phosphate (BMP) de novo synthesis from phosphatidylglycerol (1,2-diacyl-sn-glycero-3-phospho-(1'-sn-glycerol), PG). BMP is an important player in cargo sorting and degradation, regulation of cellular cholesterol levels and intercellular communication. At neutral pH, hydrolyzes the sn-1 fatty acyl group of the lysophosphatidylcholines. The chain is Lysosomal phospholipase A and acyltransferase from Homo sapiens (Human).